Consider the following 857-residue polypeptide: Trehalose transporter 1 (857 aa).

2 disordered regions span residues 1–28 and 62–202; these read MSGR…KLKE and DPFL…QKAT. Topologically, residues 1 to 392 are cytoplasmic; the sequence is MSGRDNRGAG…VYRPTTNPIY (392 aa). Phosphothreonine is present on A9. G12 carries the post-translational modification Phosphoserine. Over residues 69–81 the composition is skewed to polar residues; that stretch reads VSPQRHPQNTVRT. A compositionally biased stretch (basic and acidic residues) spans 134-143; it reads EIREHRDRQQ. Residues 171 to 181 are compositionally biased toward polar residues; sequence GNSNTNSNKAA. 3 positions are modified to phosphoserine: S248, S249, and S250. 2 disordered regions span residues 249 to 269 and 280 to 299; these read SSEE…HQSL and VLQG…EHKR. 2 positions are modified to phosphoserine: S320 and S322. The disordered stretch occupies residues 327-346; sequence LTSRQHFQQQRSISTDSRKS. Residues 330-341 show a composition bias toward polar residues; that stretch reads RQHFQQQRSIST. A helical transmembrane segment spans residues 393–413; the sequence is IWTQVLAALSVSLGSLVVGFV. The Extracellular segment spans residues 414–440; sequence SAYTSPALVSMTDRNITSFEVTQDAGS. N-linked (GlcNAc...) asparagine glycosylation is present at N428. The chain crosses the membrane as a helical span at residues 441 to 461; that stretch reads WVGGIMPLAGLAGGIAGGPLI. The Cytoplasmic portion of the chain corresponds to 462–473; the sequence is EYLGRRNTILAT. The helical transmembrane segment at 474–494 threads the bilayer; the sequence is AVPFIVSSLLIACAVNVAMVL. Residues 495 to 497 are Extracellular-facing; it reads CGR. A helical transmembrane segment spans residues 498 to 518; sequence FLAGFCVGIASLSLPVYLGET. Residues 519 to 528 are Cytoplasmic-facing; the sequence is VQPEVRGTLG. A helical membrane pass occupies residues 529 to 549; that stretch reads LLPTAFGNIGILLCFVAGSFM. N-linked (GlcNAc...) asparagine glycosylation is present at N550. Residues 550-552 are Extracellular-facing; the sequence is NWS. A helical transmembrane segment spans residues 553–573; it reads MLAFLGAALPVPFLILMFLIP. Residues 574 to 636 are Cytoplasmic-facing; that stretch reads ETPRWFVGRG…ELLKLNNLKP (63 aa). The helical transmembrane segment at 637 to 657 threads the bilayer; that stretch reads LSISLGLMFFQQFSGINAVIF. Over 658 to 673 the chain is Extracellular; that stretch reads YTVQIFKDAGSTIDGN. Residues 674-694 form a helical membrane-spanning segment; that stretch reads LCTIIVGIVNFLATFIGIVLI. The Cytoplasmic segment spans residues 695-700; the sequence is DRAGRK. The helical transmembrane segment at 701 to 721 threads the bilayer; it reads ILLYVSDIAMVLTLFVLGGFF. Residues 722 to 740 are Extracellular-facing; it reads YCKTYGPDVSHLGWLPLTC. Residues 741–761 traverse the membrane as a helical segment; sequence FVIYILGFSLGFGPIPWLMMG. The Cytoplasmic portion of the chain corresponds to 762–767; it reads EILPAK. Residues 768–788 form a helical membrane-spanning segment; it reads IRGSAASVATAFNWFCTFVVT. The Extracellular segment spans residues 789–801; the sequence is KTFQDLTVAMGAH. The helical transmembrane segment at 802-822 threads the bilayer; that stretch reads GAFWLFGAICFVGLFFVIIYV. Residues 823–857 are Cytoplasmic-facing; it reads PETQGKTLEDIERKMMGRVRRMSSVANIKPLSFNM. A phosphoserine mark is found at S845 and S846.

Belongs to the major facilitator superfamily. Sugar transporter (TC 2.A.1.1) family. Trehalose transporter subfamily. As to expression, expressed in perineurial glia of the outer layer of the nervous system that forms the blood brain barrier (at protein level). Expressed in the fat body (at protein level). May be specifically expressed in perineurial glia (at protein level). In terms of tissue distribution, may be specifically expressed in the fat body (at protein level).

The protein resides in the cell membrane. The protein localises to the vesicle. The enzyme catalyses alpha,alpha-trehalose(in) = alpha,alpha-trehalose(out). It carries out the reaction D-glucose(out) = D-glucose(in). In terms of biological role, low-capacity facilitative transporter for trehalose. Can also transport glucose. Does not transport maltose, sucrose, lactose or fructose. Mediates the bidirectional transfer of trehalose. Responsible for the transport of trehalose synthesized in the fat body and the incorporation of trehalose into other tissues that require a carbon source, thereby regulating trehalose levels in the hemolymph. Required in glial cells of the blood brain barrier to fuel glycolysis but not required in neurons. Neurons rely on the citric acid cycle for their energy needs and utilise alanine and lactate, by-products of glial cell glycolysis released into the hemolymph, as fuel. Increased expression in glial cells of the blood brain barrier during starvation and increased cell surface localization enhances carbohydrate uptake to protect the central nervous system from restricted nutrient availability. In Drosophila melanogaster (Fruit fly), this protein is Trehalose transporter 1.